The chain runs to 376 residues: MEDFSEQQLFFMRRAIEIGEKGRITAPPNPWVGCVVVQENRIIGEGFHAYAGGPHAEELAIQNASMPISGSDVYVSLEPCSHFGSCPPCANLLIKHKVSRVFVALVDPDPKVAGQGIAMLRQAGIQVYVGIGESEAQASLQPYLYQRTHNFPWTILKSAASVDGQVADSQGKSQWITCPEARHDVGKLRAESQAILVGSRTVLSDDPWLTARQPQGMLYPKQPLRVVLDSRGSVPPTSKVFDKTSPTLYVTTERCPENYIKVLDSLDVPVLLTESTPSGVDLHKVYEYLAQKKILQVLVEGGTTLHTSLLKERFVNSLVLYSGPMILGDQKRPLVGVLGNLLESASPLTLKSSQILGNSLKVVWEISPQVFEPIRN.

A deaminase region spans residues Met-1–Asn-150. Residues Glu-6–Tyr-128 enclose the CMP/dCMP-type deaminase domain. A Zn(2+)-binding site is contributed by His-55. Glu-57 (proton donor) is an active-site residue. Cys-80 and Cys-89 together coordinate Zn(2+). Positions Phe-151–Asn-376 are reductase. Ala-159 is a binding site for NADP(+). Ser-173 is a binding site for substrate. Residue Trp-175 participates in NADP(+) binding. A substrate-binding site is contributed by Arg-189. The NADP(+) site is built by Thr-201 and Asp-205. Substrate is bound by residues Leu-209 and Arg-212. An NADP(+)-binding site is contributed by Ser-230. Glu-300 serves as a coordination point for substrate. Position 302-308 (Gly-302–Ser-308) interacts with NADP(+).

This sequence in the N-terminal section; belongs to the cytidine and deoxycytidylate deaminase family. The protein in the C-terminal section; belongs to the HTP reductase family. Zn(2+) is required as a cofactor.

It carries out the reaction 2,5-diamino-6-hydroxy-4-(5-phosphoribosylamino)-pyrimidine + H2O + H(+) = 5-amino-6-(5-phospho-D-ribosylamino)uracil + NH4(+). The enzyme catalyses 5-amino-6-(5-phospho-D-ribitylamino)uracil + NADP(+) = 5-amino-6-(5-phospho-D-ribosylamino)uracil + NADPH + H(+). It functions in the pathway cofactor biosynthesis; riboflavin biosynthesis; 5-amino-6-(D-ribitylamino)uracil from GTP: step 2/4. It participates in cofactor biosynthesis; riboflavin biosynthesis; 5-amino-6-(D-ribitylamino)uracil from GTP: step 3/4. Functionally, converts 2,5-diamino-6-(ribosylamino)-4(3h)-pyrimidinone 5'-phosphate into 5-amino-6-(ribosylamino)-2,4(1h,3h)-pyrimidinedione 5'-phosphate. The sequence is that of Riboflavin biosynthesis protein RibD (ribD) from Chlamydia pneumoniae (Chlamydophila pneumoniae).